The following is a 326-amino-acid chain: tRNA-modifying protein YgfZ (326 aa).

Folate contacts are provided by Trp27 and Trp189.

The protein belongs to the tRNA-modifying YgfZ family.

It is found in the cytoplasm. Folate-binding protein involved in regulating the level of ATP-DnaA and in the modification of some tRNAs. It is probably a key factor in regulatory networks that act via tRNA modification, such as initiation of chromosomal replication. This chain is tRNA-modifying protein YgfZ, found in Escherichia coli O6:H1 (strain CFT073 / ATCC 700928 / UPEC).